The chain runs to 215 residues: uncharacterized protein (215 aa).

Helical transmembrane passes span Val-40–Leu-60 and Leu-72–Leu-92.

It is found in the mitochondrion membrane. This is an uncharacterized protein from Arabidopsis thaliana (Mouse-ear cress).